The following is a 106-amino-acid chain: Large ribosomal subunit protein P2A (106 aa).

Lys2 participates in a covalent cross-link: Glycyl lysine isopeptide (Lys-Gly) (interchain with G-Cter in ubiquitin). Phosphothreonine is present on Thr16. Ser40 and Ser43 each carry phosphoserine. Residue Lys48 forms a Glycyl lysine isopeptide (Lys-Gly) (interchain with G-Cter in ubiquitin) linkage. Ser49 carries the post-translational modification Phosphoserine. The span at 65-82 (PAAGPASAGGAAAASGDA) shows a compositional bias: low complexity. The interval 65-106 (PAAGPASAGGAAAASGDAAAEEEKEEEAAEESDDDMGFGLFD) is disordered. The span at 83 to 100 (AAEEEKEEEAAEESDDDM) shows a compositional bias: acidic residues. Ser96 carries the phosphoserine modification.

This sequence belongs to the eukaryotic ribosomal protein P1/P2 family. In terms of assembly, component of the large ribosomal subunit (LSU). Mature yeast ribosomes consist of a small (40S) and a large (60S) subunit. The 40S small subunit contains 1 molecule of ribosomal RNA (18S rRNA) and 33 different proteins (encoded by 57 genes). The large 60S subunit contains 3 rRNA molecules (25S, 5.8S and 5S rRNA) and 46 different proteins (encoded by 81 genes). The 5 acidic ribosomal P-proteins form the stalk structure of the 60S subunit. They are organized as a pentameric complex in which uL10/P0 interacts with 2 heterodimers, P1A-P2B and P1B-P2A. Post-translationally, phosphorylation is not involved in the interaction of the acidic P proteins with the ribosome, however it is suggested to affect the ribosome activity and to participate in a possible ribosome regulatory mechanism. In terms of processing, the N-terminus is not modified.

The protein localises to the cytoplasm. Functionally, component of the ribosome, a large ribonucleoprotein complex responsible for the synthesis of proteins in the cell. The small ribosomal subunit (SSU) binds messenger RNAs (mRNAs) and translates the encoded message by selecting cognate aminoacyl-transfer RNA (tRNA) molecules. The large subunit (LSU) contains the ribosomal catalytic site termed the peptidyl transferase center (PTC), which catalyzes the formation of peptide bonds, thereby polymerizing the amino acids delivered by tRNAs into a polypeptide chain. The nascent polypeptides leave the ribosome through a tunnel in the LSU and interact with protein factors that function in enzymatic processing, targeting, and the membrane insertion of nascent chains at the exit of the ribosomal tunnel. The sequence is that of Large ribosomal subunit protein P2A from Saccharomyces cerevisiae (strain ATCC 204508 / S288c) (Baker's yeast).